We begin with the raw amino-acid sequence, 371 residues long: Probable tRNA sulfurtransferase (371 aa).

The THUMP domain maps to 54-156 (NANIEALSEV…NEMTYFYHKV (103 aa)). ATP contacts are provided by residues 174–175 (LF), 199–200 (NF), Lys254, Gly276, and Gln285.

It belongs to the ThiI family.

It localises to the cytoplasm. The catalysed reaction is [ThiI sulfur-carrier protein]-S-sulfanyl-L-cysteine + a uridine in tRNA + 2 reduced [2Fe-2S]-[ferredoxin] + ATP + H(+) = [ThiI sulfur-carrier protein]-L-cysteine + a 4-thiouridine in tRNA + 2 oxidized [2Fe-2S]-[ferredoxin] + AMP + diphosphate. The enzyme catalyses [ThiS sulfur-carrier protein]-C-terminal Gly-Gly-AMP + S-sulfanyl-L-cysteinyl-[cysteine desulfurase] + AH2 = [ThiS sulfur-carrier protein]-C-terminal-Gly-aminoethanethioate + L-cysteinyl-[cysteine desulfurase] + A + AMP + 2 H(+). Its pathway is cofactor biosynthesis; thiamine diphosphate biosynthesis. Catalyzes the ATP-dependent transfer of a sulfur to tRNA to produce 4-thiouridine in position 8 of tRNAs, which functions as a near-UV photosensor. Also catalyzes the transfer of sulfur to the sulfur carrier protein ThiS, forming ThiS-thiocarboxylate. This is a step in the synthesis of thiazole, in the thiamine biosynthesis pathway. The sulfur is donated as persulfide by IscS. The sequence is that of Probable tRNA sulfurtransferase from Saccharolobus solfataricus (strain ATCC 35092 / DSM 1617 / JCM 11322 / P2) (Sulfolobus solfataricus).